A 413-amino-acid chain; its full sequence is Serine--tRNA ligase (413 aa).

221–223 contacts L-serine; it reads TAE. An ATP-binding site is contributed by 252-254; that stretch reads RRE. Glu275 contacts L-serine. 339–342 is an ATP binding site; it reads EVSS. Ser375 serves as a coordination point for L-serine.

Belongs to the class-II aminoacyl-tRNA synthetase family. Type-1 seryl-tRNA synthetase subfamily. Homodimer. The tRNA molecule binds across the dimer.

The protein resides in the cytoplasm. It carries out the reaction tRNA(Ser) + L-serine + ATP = L-seryl-tRNA(Ser) + AMP + diphosphate + H(+). The enzyme catalyses tRNA(Sec) + L-serine + ATP = L-seryl-tRNA(Sec) + AMP + diphosphate + H(+). It participates in aminoacyl-tRNA biosynthesis; selenocysteinyl-tRNA(Sec) biosynthesis; L-seryl-tRNA(Sec) from L-serine and tRNA(Sec): step 1/1. Its function is as follows. Catalyzes the attachment of serine to tRNA(Ser). Is also able to aminoacylate tRNA(Sec) with serine, to form the misacylated tRNA L-seryl-tRNA(Sec), which will be further converted into selenocysteinyl-tRNA(Sec). In Dehalococcoides mccartyi (strain ATCC BAA-2266 / KCTC 15142 / 195) (Dehalococcoides ethenogenes (strain 195)), this protein is Serine--tRNA ligase.